A 341-amino-acid chain; its full sequence is KH domain-containing RNA-binding protein qki.S (341 aa).

Residues Y88 to V154 enclose the KH domain. Residues R324–R330 carry the Nuclear localization signal motif.

This sequence belongs to the quaking family. In terms of assembly, homodimer; does not require RNA to homodimerize.

It is found in the nucleus. The protein localises to the cytoplasm. Functionally, RNA reader protein, which recognizes and binds specific RNAs, thereby regulating RNA metabolic processes, such as pre-mRNA splicing, circular RNA (circRNA) formation, mRNA export, mRNA stability and/or translation. Involved in various cellular processes, such as mRNA storage into stress granules, apoptosis, interferon response, glial cell fate and development. Binds to the 5'-NACUAAY-N(1,20)-UAAY-3' RNA core sequence. Acts as a mRNA modification reader that specifically recognizes and binds mRNA transcripts modified by internal N(7)-methylguanine (m7G). Promotes the formation of circular RNAs (circRNAs): acts by binding to sites flanking circRNA-forming exons. CircRNAs are produced by back-splicing circularization of pre-mRNAs. Required to protect and promote stability of mRNAs which promotes oligodendrocyte differentiation. Acts as an important regulator of muscle development. Essential for notochord development. The chain is KH domain-containing RNA-binding protein qki.S from Xenopus laevis (African clawed frog).